The primary structure comprises 180 residues: UPF0743 protein C215.06c (180 aa).

2 C2HC LYAR-type zinc fingers span residues 1–26 and 27–51; these read MVSF…SRCH and GAYF…TSCM. 8 residues coordinate Zn(2+): Cys-6, Cys-9, His-21, Cys-25, Cys-32, Cys-35, His-47, and Cys-50. Residues 61 to 125 form a disordered region; the sequence is LYRPTKKELK…KETVSSPAEQ (65 aa). The segment covering 77 to 95 has biased composition (polar residues); it reads NAVNSKELSPNTDNQNTPA. Residue Ser-85 is modified to Phosphoserine. Residues 100–111 are compositionally biased toward basic and acidic residues; it reads HSLDENEKDKEN.

It belongs to the UPF0743 family.

The protein resides in the nucleus. This Schizosaccharomyces pombe (strain 972 / ATCC 24843) (Fission yeast) protein is UPF0743 protein C215.06c.